The chain runs to 199 residues: Recombination protein RecR (199 aa).

The C4-type zinc finger occupies 58 to 73 (CLVCGNVTGSDICPIC). In terms of domain architecture, Toprim spans 81–176 (GEICVVTDVA…AVTGLAQGVP (96 aa)).

Belongs to the RecR family.

Its function is as follows. May play a role in DNA repair. It seems to be involved in an RecBC-independent recombinational process of DNA repair. It may act with RecF and RecO. The protein is Recombination protein RecR of Paracoccus denitrificans (strain Pd 1222).